Here is a 370-residue protein sequence, read N- to C-terminus: 4-hydroxy-3-methylbut-2-en-1-yl diphosphate synthase (flavodoxin) (370 aa).

Residues Cys270, Cys273, Cys305, and Glu312 each coordinate [4Fe-4S] cluster.

The protein belongs to the IspG family. The cofactor is [4Fe-4S] cluster.

It catalyses the reaction (2E)-4-hydroxy-3-methylbut-2-enyl diphosphate + oxidized [flavodoxin] + H2O + 2 H(+) = 2-C-methyl-D-erythritol 2,4-cyclic diphosphate + reduced [flavodoxin]. It participates in isoprenoid biosynthesis; isopentenyl diphosphate biosynthesis via DXP pathway; isopentenyl diphosphate from 1-deoxy-D-xylulose 5-phosphate: step 5/6. In terms of biological role, converts 2C-methyl-D-erythritol 2,4-cyclodiphosphate (ME-2,4cPP) into 1-hydroxy-2-methyl-2-(E)-butenyl 4-diphosphate. This Hahella chejuensis (strain KCTC 2396) protein is 4-hydroxy-3-methylbut-2-en-1-yl diphosphate synthase (flavodoxin).